The primary structure comprises 581 residues: Jasmonoyl--L-amino acid synthetase GH3.5 (581 aa).

Position 92 (Ser92) interacts with ATP. Residue Ser95 coordinates jasmonate. Residues Thr115, Asn161, and 324 to 329 (GASEGW) each bind ATP. 159-163 (TTNLY) is an an L-alpha-amino acid binding site. Residues 321-324 (ADYG) and Ser326 contribute to the jasmonate site. 534–538 (EILDH) contributes to the an L-alpha-amino acid binding site. Residue Lys561 coordinates ATP.

Belongs to the IAA-amido conjugating enzyme family. As to expression, expressed in green shoots, roots and flowers.

The enzyme catalyses a jasmonate + an L-alpha-amino acid + ATP = a jasmonyl-L-amino acid + AMP + diphosphate + H(+). In terms of biological role, catalyzes the synthesis of jasmonate-amino acid conjugates by adenylation. Catalyzes the conjugation of jasmonate (JA) to Ile when expressed in a heterologous system (E.coli). Catalyzes in vitro the conjugation of jasmonate (JA) to Ile, Phe, Cys, Leu, Met, Ala, Val and Trp. Involved in the production of JA-Ile in response to infection by the rice blast fungus Magnaporthe oryzae. Required for the accumulation of the flavonoid phytoalexin sakuranetin in response to infection by the rice blast fungus. Involved in herbivory-induced JA-Ile accumulation. Involved in the production of JA-Ile in response to wounding. Required for modulation of light and JA signaling in photomorphogenesis. Required for normal seed development. Required for optimal flower opening and closing and anther dehiscence. May catalyze the synthesis of indole-3-acetic acid (IAA)-amino acid conjugates, providing a mechanism for the plant to cope with the presence of excess auxin. The protein is Jasmonoyl--L-amino acid synthetase GH3.5 of Oryza sativa subsp. japonica (Rice).